Consider the following 161-residue polypeptide: Small ribosomal subunit protein uS9 (161 aa).

It belongs to the universal ribosomal protein uS9 family.

The sequence is that of Small ribosomal subunit protein uS9 from Methylobacterium radiotolerans (strain ATCC 27329 / DSM 1819 / JCM 2831 / NBRC 15690 / NCIMB 10815 / 0-1).